A 270-amino-acid polypeptide reads, in one-letter code: Glutamate 5-kinase (270 aa).

Residue lysine 17 participates in ATP binding. Residues serine 57, aspartate 144, and asparagine 160 each contribute to the substrate site. ATP-binding positions include 180-181 and 222-228; these read SD and TGGMTSK.

This sequence belongs to the glutamate 5-kinase family.

Its subcellular location is the cytoplasm. It carries out the reaction L-glutamate + ATP = L-glutamyl 5-phosphate + ADP. It functions in the pathway amino-acid biosynthesis; L-proline biosynthesis; L-glutamate 5-semialdehyde from L-glutamate: step 1/2. Functionally, catalyzes the transfer of a phosphate group to glutamate to form L-glutamate 5-phosphate. The polypeptide is Glutamate 5-kinase (Lactococcus lactis subsp. cremoris (strain SK11)).